The following is a 493-amino-acid chain: Vacuolar-processing enzyme (493 aa).

The first 19 residues, 1 to 19, serve as a signal peptide directing secretion; the sequence is MGSSQLSTLLFFTIVVTFL. N-linked (GlcNAc...) asparagine glycosylation occurs at N147. H174 is an active-site residue. C216 acts as the Nucleophile in catalysis. A disulfide bridge connects residues C249 and C263. Residues N295 and N331 are each glycosylated (N-linked (GlcNAc...) asparagine). Cystine bridges form between C429–C459 and C441–C476.

The protein belongs to the peptidase C13 family.

Its function is as follows. Asparagine-specific endopeptidase involved in the processing of vacuolar seed protein precursors into the mature forms. The protein is Vacuolar-processing enzyme of Vicia sativa (Spring vetch).